The chain runs to 632 residues: Effector protein hopAD1 (632 aa).

The segment at 13–34 (TAVDSSLPTSATSQTISNTKSR) is disordered. Residues 15 to 32 (VDSSLPTSATSQTISNTK) are compositionally biased toward polar residues.

It is found in the secreted. The sequence is that of Effector protein hopAD1 (hopAD1) from Pseudomonas syringae pv. tomato (strain ATCC BAA-871 / DC3000).